Here is a 362-residue protein sequence, read N- to C-terminus: Chorismate synthase (362 aa).

Arg-47 provides a ligand contact to NADP(+). Residues 124 to 126, Gly-286, 301 to 305, and Arg-327 each bind FMN; these read RSS and KPTAT.

The protein belongs to the chorismate synthase family. In terms of assembly, homotetramer. It depends on FMNH2 as a cofactor.

The enzyme catalyses 5-O-(1-carboxyvinyl)-3-phosphoshikimate = chorismate + phosphate. It functions in the pathway metabolic intermediate biosynthesis; chorismate biosynthesis; chorismate from D-erythrose 4-phosphate and phosphoenolpyruvate: step 7/7. In terms of biological role, catalyzes the anti-1,4-elimination of the C-3 phosphate and the C-6 proR hydrogen from 5-enolpyruvylshikimate-3-phosphate (EPSP) to yield chorismate, which is the branch point compound that serves as the starting substrate for the three terminal pathways of aromatic amino acid biosynthesis. This reaction introduces a second double bond into the aromatic ring system. In Trichormus variabilis (strain ATCC 29413 / PCC 7937) (Anabaena variabilis), this protein is Chorismate synthase.